Reading from the N-terminus, the 243-residue chain is NAD-dependent protein deacetylase (243 aa).

Residues 1-243 form the Deacetylase sirtuin-type domain; sequence MRNDLETLKH…VSVVKSLMTE (243 aa). Positions 24, 35, 36, 105, 107, 108, and 123 each coordinate NAD(+). A nicotinamide-binding site is contributed by Phe-35. Nicotinamide is bound by residues Ile-107 and Asp-108. Residue His-123 is the Proton acceptor of the active site. 4 residues coordinate Zn(2+): Cys-131, Cys-134, Cys-151, and Cys-154. 4 residues coordinate NAD(+): Ser-192, Ser-193, Asn-215, and Asp-232.

Belongs to the sirtuin family. Class U subfamily. Zn(2+) serves as cofactor.

The protein localises to the cytoplasm. The catalysed reaction is N(6)-acetyl-L-lysyl-[protein] + NAD(+) + H2O = 2''-O-acetyl-ADP-D-ribose + nicotinamide + L-lysyl-[protein]. Its function is as follows. NAD-dependent protein deacetylase which modulates the activities of several enzymes which are inactive in their acetylated form. In Staphylococcus aureus (strain MSSA476), this protein is NAD-dependent protein deacetylase.